A 599-amino-acid chain; its full sequence is Mediator of RNA polymerase II transcription subunit 26 (599 aa).

Residues 10–87 (QIRDRLLQAI…RSWQKLIEPV (78 aa)) enclose the TFIIS N-terminal domain. Disordered stretches follow at residues 98-331 (AGAP…RLEL), 352-403 (AGLG…RDYT), and 427-470 (FDPM…LQSP). Positions 123-133 (SVHDLKYRNDM) are enriched in basic and acidic residues. The span at 174-191 (VPNSSPLPTNGISGSPES) shows a compositional bias: polar residues. Residues 207 to 218 (NRLEHGENDKHS) show a composition bias toward basic and acidic residues. The segment covering 314–324 (SPLPLAQPSTP) has biased composition (pro residues). The span at 441-463 (EPVRADSPVHTEQPRTELDKPEA) shows a compositional bias: basic and acidic residues. 2 positions are modified to phosphoserine: Ser-447 and Ser-469.

This sequence belongs to the Mediator complex subunit 26 family. Component of the Mediator complex, which is composed of MED1, MED4, MED6, MED7, MED8, MED9, MED10, MED11, MED12, MED13, MED13L, MED14, MED15, MED16, MED17, MED18, MED19, MED20, MED21, MED22, MED23, MED24, MED25, MED26, MED27, MED29, MED30, MED31, CCNC, CDK8 and CDC2L6/CDK11. The MED12, MED13, CCNC and CDK8 subunits form a distinct module termed the CDK8 module. Mediator containing the CDK8 module is less active than Mediator lacking this module in supporting transcriptional activation. Individual preparations of the Mediator complex lacking one or more distinct subunits have been variously termed ARC, CRSP, DRIP, PC2, SMCC and TRAP. Interacts with CEBPB (when not methylated).

The protein localises to the nucleus. Functionally, component of the Mediator complex, a coactivator involved in the regulated transcription of nearly all RNA polymerase II-dependent genes. Mediator functions as a bridge to convey information from gene-specific regulatory proteins to the basal RNA polymerase II transcription machinery. Mediator is recruited to promoters by direct interactions with regulatory proteins and serves as a scaffold for the assembly of a functional pre-initiation complex with RNA polymerase II and the general transcription factors. The protein is Mediator of RNA polymerase II transcription subunit 26 (MED26) of Bos taurus (Bovine).